Consider the following 443-residue polypeptide: ATP-dependent protease ATPase subunit HslU (443 aa).

ATP contacts are provided by residues Ile-18, 60-65 (GVGKTE), Asp-256, Glu-321, and Arg-393.

It belongs to the ClpX chaperone family. HslU subfamily. In terms of assembly, a double ring-shaped homohexamer of HslV is capped on each side by a ring-shaped HslU homohexamer. The assembly of the HslU/HslV complex is dependent on binding of ATP.

The protein localises to the cytoplasm. In terms of biological role, ATPase subunit of a proteasome-like degradation complex; this subunit has chaperone activity. The binding of ATP and its subsequent hydrolysis by HslU are essential for unfolding of protein substrates subsequently hydrolyzed by HslV. HslU recognizes the N-terminal part of its protein substrates and unfolds these before they are guided to HslV for hydrolysis. The protein is ATP-dependent protease ATPase subunit HslU of Shigella dysenteriae serotype 1 (strain Sd197).